A 480-amino-acid chain; its full sequence is Sensor histidine kinase CusS (480 aa).

At 1–15 (MVSKPFQRPFSLATR) the chain is on the cytoplasmic side. The helical transmembrane segment at 16 to 36 (LTFFISLATIAAFFAFAWIMI) threads the bilayer. Over 37-186 (HSVKVHFAEQ…LHYINDLMNK (150 aa)) the chain is Periplasmic. A helical transmembrane segment spans residues 187 to 207 (LIMTASVISILIVFIVLLAVH). In terms of domain architecture, HAMP spans 207 to 260 (HKGHAPIRSVSRQIQNITSKDLDVRLDPQTVPIELEQLVLSFNHMIERIEDVFT). The Cytoplasmic segment spans residues 208–480 (KGHAPIRSVS…GTRFVIILPA (273 aa)). The Histidine kinase domain occupies 268–480 (DIAHEIRTPI…GTRFVIILPA (213 aa)). The residue at position 271 (H271) is a Phosphohistidine; by autocatalysis.

In terms of processing, autophosphorylated.

Its subcellular location is the cell inner membrane. It carries out the reaction ATP + protein L-histidine = ADP + protein N-phospho-L-histidine.. Its function is as follows. Member of the two-component regulatory system CusS/CusR involved in response to copper and silver. Acts as a copper/silver ion sensor. Activates CusR by phosphorylation. This is Sensor histidine kinase CusS (cusS) from Escherichia coli O6:H1 (strain CFT073 / ATCC 700928 / UPEC).